Consider the following 417-residue polypeptide: S-inosyl-L-homocysteine hydrolase (417 aa).

D124 and E149 together coordinate substrate. 150-152 (TTT) is an NAD(+) binding site. K179 and D183 together coordinate substrate. NAD(+) is bound by residues N184, 213 to 218 (GYGWCG), E236, N271, 292 to 294 (SGH), and N339.

It belongs to the adenosylhomocysteinase family. NAD(+) serves as cofactor.

It is found in the cytoplasm. The enzyme catalyses S-inosyl-L-homocysteine + H2O = L-homocysteine + inosine. Its pathway is amino-acid biosynthesis; S-adenosyl-L-methionine biosynthesis. Its function is as follows. Catalyzes the hydrolysis of S-inosyl-L-homocysteine (SIH) to L-homocysteine (Hcy) and inosine. Likely functions in a S-adenosyl-L-methionine (SAM) recycling pathway from S-adenosyl-L-homocysteine (SAH) produced from SAM-dependent methylation reactions. Can also catalyze the reverse reaction in vitro, i.e. the synthesis of SIH from Hcy and inosine. This chain is S-inosyl-L-homocysteine hydrolase, found in Methanothermobacter thermautotrophicus (strain ATCC 29096 / DSM 1053 / JCM 10044 / NBRC 100330 / Delta H) (Methanobacterium thermoautotrophicum).